The following is a 353-amino-acid chain: Deoxyribonuclease-2-alpha (353 aa).

The first 19 residues, 1-19 (MATLRSLLLAALLWVPAEA), serve as a signal peptide directing secretion. The cysteines at positions 22 and 161 are disulfide-linked. Residues Asn-71, Asn-88, Asn-214, and Asn-268 are each glycosylated (N-linked (GlcNAc...) asparagine). 2 disulfide bridges follow: Cys-269-Cys-349 and Cys-310-Cys-329. His-297 is a catalytic residue.

The protein belongs to the DNase II family. In terms of tissue distribution, highly expressed in fetal liver macrophages.

Its subcellular location is the lysosome. The catalysed reaction is Endonucleolytic cleavage to nucleoside 3'-phosphates and 3'-phosphooligonucleotide end-products.. Its function is as follows. Hydrolyzes DNA under acidic conditions with a preference for double-stranded DNA. Plays a major role in the clearance of nucleic acids generated through apoptosis, hence preventing autoinflammation. Necessary for proper fetal development and for definitive erythropoiesis in fetal liver and bone marrow, where it degrades nuclear DNA expelled from erythroid precursor cells. The polypeptide is Deoxyribonuclease-2-alpha (Dnase2) (Mus musculus (Mouse)).